The following is a 264-amino-acid chain: Glycerol uptake facilitator protein (264 aa).

At 1-3 (MDK) the chain is on the cytoplasmic side. Residues 4 to 32 (SLKANCIGEFLGTALLIFFGVGCVAALKV) form a helical membrane-spanning segment. Residues 33-37 (AGASF) are Periplasmic-facing. The helical transmembrane segment at 38–58 (GLWEISIMWGMGVALAVYATA) threads the bilayer. Residues 59–61 (GLS) are Cytoplasmic-facing. Residues 62–65 (GAHL) lie within the membrane without spanning it. The NPA 1 signature appears at 66 to 68 (NPA). The helical intramembrane region spans 66–76 (NPAVTIALWKF). Over 77–82 (ACFDGK) the chain is Cytoplasmic. The chain crosses the membrane as a helical span at residues 83 to 106 (KVIPYIISQMLGAFFAAALVYALY). Topologically, residues 107-141 (RNVFIDYETVHNIVRGTQESLSLAGTFSTYPHPSL) are periplasmic. Residues 142–167 (SIGGAFAVEFVITAILMALIMALTDD) traverse the membrane as a helical segment. The Cytoplasmic portion of the chain corresponds to 168 to 175 (GNGVPRGP). The chain crosses the membrane as a helical span at residues 176 to 192 (LAPLLIGILIAVIGGAM). Residues 193–196 (GPLT) are Periplasmic-facing. The stretch at 197 to 200 (GFAM) is an intramembrane region. Residues 201 to 203 (NPA) carry the NPA 2 motif. Residues 201–214 (NPARDFGPKFFAYL) constitute an intramembrane region (helical). Over 215-229 (AGWGELALTGGREIP) the chain is Periplasmic. The helical transmembrane segment at 230 to 252 (YFIVPMVAPVLGALAGAWLYKKA) threads the bilayer. Residues 253-264 (IGGNLPCNCGCE) lie on the Cytoplasmic side of the membrane.

The protein belongs to the MIP/aquaporin (TC 1.A.8) family.

It localises to the cell inner membrane. It catalyses the reaction glycerol(in) = glycerol(out). Mediates glycerol diffusion across the cytoplasmic membrane via a pore-type mechanism. In Haemophilus influenzae (strain ATCC 51907 / DSM 11121 / KW20 / Rd), this protein is Glycerol uptake facilitator protein (glpF).